Reading from the N-terminus, the 136-residue chain is Large ribosomal subunit protein uL16 (136 aa).

It belongs to the universal ribosomal protein uL16 family. Part of the 50S ribosomal subunit.

Functionally, binds 23S rRNA and is also seen to make contacts with the A and possibly P site tRNAs. This chain is Large ribosomal subunit protein uL16, found in Aliivibrio salmonicida (strain LFI1238) (Vibrio salmonicida (strain LFI1238)).